The primary structure comprises 439 residues: Secreted RxLR effector protein 117 (439 aa).

Positions 1–21 (MRGAYYVLAALLVVASSQIAA) are cleaved as a signal peptide. The RxLR-dEER motif lies at 48–65 (RYLRGGHDVHDDSANEER).

This sequence belongs to the RxLR effector family.

It is found in the secreted. The protein resides in the host nucleus. Its function is as follows. Secreted effector that acts as an elicitor that induces cell death in host plant cells. The polypeptide is Secreted RxLR effector protein 117 (Plasmopara viticola (Downy mildew of grapevine)).